We begin with the raw amino-acid sequence, 509 residues long: 2,3-bisphosphoglycerate-independent phosphoglycerate mutase (509 aa).

Asp11 serves as a coordination point for Mn(2+). Tyr35 bears the Phosphotyrosine mark. Ser61 contacts Mn(2+). The active-site Phosphoserine intermediate is the Ser61. Residues His122, 152–153 (RD), Arg184, Arg190, 260–263 (RPDR), and Lys335 contribute to the substrate site. The Mn(2+) site is built by Asp402, His406, Asp443, His444, and His461.

Belongs to the BPG-independent phosphoglycerate mutase family. As to quaternary structure, monomer. Mn(2+) is required as a cofactor.

The catalysed reaction is (2R)-2-phosphoglycerate = (2R)-3-phosphoglycerate. It functions in the pathway carbohydrate degradation; glycolysis; pyruvate from D-glyceraldehyde 3-phosphate: step 3/5. In terms of biological role, essential for rapid growth and for sporulation. Catalyzes the interconversion of 2-phosphoglycerate and 3-phosphoglycerate. This is 2,3-bisphosphoglycerate-independent phosphoglycerate mutase from Bacillus anthracis.